Consider the following 244-residue polypeptide: U4/U6.U5 tri-snRNP-associated protein 3-like protein C162.01c (244 aa).

Composition is skewed to basic and acidic residues over residues 1-11 (MSSSRSGEHRR) and 20-116 (ESSR…RRDG). Disordered stretches follow at residues 1–192 (MSSS…EDEA) and 223–244 (KKTK…LDNE). Residues S121 and S140 each carry the phosphoserine modification. Positions 126–182 (GLERKREHEKLQAPSPKEEEERPVDQGDKMDGVKEDKDGSLEVGKSHDAMTRTKSAE) are enriched in basic and acidic residues. Acidic residues predominate over residues 183 to 192 (EEIVEQEDEA).

Belongs to the SNUT3 family. As to quaternary structure, part of a tri-snRNP complex.

The protein localises to the nucleus. May play a role in mRNA splicing. The polypeptide is U4/U6.U5 tri-snRNP-associated protein 3-like protein C162.01c (Schizosaccharomyces pombe (strain 972 / ATCC 24843) (Fission yeast)).